We begin with the raw amino-acid sequence, 126 residues long: H2B.U histone 2 (126 aa).

A disordered region spans residues 1–35 (MPEPSRSTPAPKKGSKKAITKAQKKDGKKRKRGRK). At Pro2 the chain carries N-acetylproline. Position 3 is an ADP-ribosyl glutamic acid (Glu3). Ser7 bears the ADP-ribosylserine mark. N6-(beta-hydroxybutyryl)lysine; alternate is present on Lys12. Residues Lys12 and Lys13 each carry the N6-acetyllysine; alternate modification. N6-crotonyllysine; alternate is present on residues Lys12 and Lys13. Lys12 carries the post-translational modification N6-lactoyllysine; alternate. Position 13 is an N6-(2-hydroxyisobutyryl)lysine; alternate (Lys13). Ser15 is subject to Phosphoserine; by STK4/MST1. Lys16, Lys17, Lys21, and Lys24 each carry N6-acetyllysine; alternate. N6-crotonyllysine; alternate is present on residues Lys16, Lys17, Lys21, and Lys24. An N6-lactoyllysine; alternate mark is found at Lys16, Lys17, Lys21, and Lys24. An N6-glutaryllysine; alternate modification is found at Lys17. An N6-(beta-hydroxybutyryl)lysine; alternate modification is found at Lys21. N6-(2-hydroxyisobutyryl)lysine; alternate is present on residues Lys21 and Lys24. Lys21 is subject to N6-butyryllysine; alternate. A Glycyl lysine isopeptide (Lys-Gly) (interchain with G-Cter in SUMO2); alternate cross-link involves residue Lys21. N6-(2-hydroxyisobutyryl)lysine is present on Lys25. Lys35 is modified (N6-(beta-hydroxybutyryl)lysine; alternate). Position 35 is an N6-crotonyllysine; alternate (Lys35). Lys35 carries the post-translational modification N6-(2-hydroxyisobutyryl)lysine; alternate. N6-glutaryllysine; alternate is present on Lys35. N6-succinyllysine; alternate is present on Lys35. Residue Lys35 forms a Glycyl lysine isopeptide (Lys-Gly) (interchain with G-Cter in ubiquitin); alternate linkage. Glu36 is subject to PolyADP-ribosyl glutamic acid. Ser37 is subject to Phosphoserine; by AMPK. N6-lactoyllysine; alternate is present on Lys44. 3 positions are modified to N6-(2-hydroxyisobutyryl)lysine; alternate: Lys44, Lys47, and Lys58. An N6-glutaryllysine; alternate mark is found at Lys44 and Lys47. N6-methyllysine; alternate is present on Lys47. Lys58 carries the post-translational modification N6,N6-dimethyllysine; alternate. Arg80 carries the dimethylated arginine modification. An N6-acetyllysine; alternate modification is found at Lys86. Lys86 is subject to N6-lactoyllysine; alternate. At Lys86 the chain carries N6-(2-hydroxyisobutyryl)lysine; alternate. Position 86 is an N6,N6,N6-trimethyllysine; alternate (Lys86). Arg87 and Arg93 each carry omega-N-methylarginine. Lys109 is subject to N6-(beta-hydroxybutyryl)lysine; alternate. Lys109 is subject to N6-lactoyllysine; alternate. The residue at position 109 (Lys109) is an N6-(2-hydroxyisobutyryl)lysine; alternate. Lys109 carries the N6-glutaryllysine; alternate modification. Lys109 is subject to N6-methyllysine; alternate. An O-linked (GlcNAc) serine glycan is attached at Ser113. Thr116 bears the Phosphothreonine mark. Lys117 bears the N6-(beta-hydroxybutyryl)lysine; alternate mark. N6-lactoyllysine; alternate is present on residues Lys117 and Lys121. An N6-(2-hydroxyisobutyryl)lysine; alternate mark is found at Lys117 and Lys121. Lys117 and Lys121 each carry N6-glutaryllysine; alternate. Residues Lys117 and Lys121 each carry the N6-succinyllysine; alternate modification. Lys117 carries the N6-methylated lysine; alternate modification. Lys121 is covalently cross-linked (Glycyl lysine isopeptide (Lys-Gly) (interchain with G-Cter in ubiquitin); alternate).

The protein belongs to the histone H2B family. In terms of assembly, the nucleosome is a histone octamer containing two molecules each of H2A, H2B, H3 and H4 assembled in one H3-H4 heterotetramer and two H2A-H2B heterodimers. The octamer wraps approximately 147 bp of DNA. Monoubiquitination at Lys-35 (H2BK34Ub) by the MSL1/MSL2 dimer is required for histone H3 'Lys-4' (H3K4me) and 'Lys-79' (H3K79me) methylation and transcription activation at specific gene loci, such as HOXA9 and MEIS1 loci. Similarly, monoubiquitination at Lys-121 (H2BK120Ub) by the RNF20/40 complex gives a specific tag for epigenetic transcriptional activation and is also prerequisite for histone H3 'Lys-4' and 'Lys-79' methylation. It also functions cooperatively with the FACT dimer to stimulate elongation by RNA polymerase II. H2BK120Ub also acts as a regulator of mRNA splicing: deubiquitination by USP49 is required for efficient cotranscriptional splicing of a large set of exons. Post-translationally, phosphorylated on Ser-15 (H2BS14ph) by STK4/MST1 during apoptosis; which facilitates apoptotic chromatin condensation. Also phosphorylated on Ser-15 in response to DNA double strand breaks (DSBs), and in correlation with somatic hypermutation and immunoglobulin class-switch recombination. Phosphorylation at Ser-37 (H2BS36ph) by AMPK in response to stress promotes transcription. In terms of processing, glcNAcylation at Ser-113 promotes monoubiquitination of Lys-121. It fluctuates in response to extracellular glucose, and associates with transcribed genes. ADP-ribosylated by PARP1 or PARP2 on Ser-7 (H2BS6ADPr) in response to DNA damage. H2BS6ADPr promotes recruitment of CHD1L. Mono-ADP-ribosylated on Glu-3 (H2BE2ADPr) by PARP3 in response to single-strand breaks. Poly ADP-ribosylation on Glu-36 (H2BE35ADPr) by PARP1 regulates adipogenesis: it inhibits phosphorylation at Ser-37 (H2BS36ph), thereby blocking expression of pro-adipogenetic genes. Post-translationally, crotonylation (Kcr) is specifically present in male germ cells and marks testis-specific genes in post-meiotic cells, including X-linked genes that escape sex chromosome inactivation in haploid cells. Crotonylation marks active promoters and enhancers and confers resistance to transcriptional repressors. It is also associated with post-meiotically activated genes on autosomes. In terms of processing, hydroxybutyrylation of histones is induced by starvation. Lactylated in macrophages by EP300/P300 by using lactoyl-CoA directly derived from endogenous or exogenous lactate, leading to stimulates gene transcription.

It is found in the nucleus. The protein localises to the chromosome. Core component of nucleosome. Nucleosomes wrap and compact DNA into chromatin, limiting DNA accessibility to the cellular machineries which require DNA as a template. Histones thereby play a central role in transcription regulation, DNA repair, DNA replication and chromosomal stability. DNA accessibility is regulated via a complex set of post-translational modifications of histones, also called histone code, and nucleosome remodeling. This chain is H2B.U histone 2, found in Mus musculus (Mouse).